A 680-amino-acid chain; its full sequence is Methionine--tRNA ligase (680 aa).

The 'HIGH' region signature appears at 15-25 (PYANGPVHIGH). Cysteine 147, cysteine 150, cysteine 160, and cysteine 163 together coordinate Zn(2+). A 'KMSKS' region motif is present at residues 332-336 (KISTS). Position 335 (threonine 335) interacts with ATP. The tRNA-binding domain occupies 579–680 (DFLKLDIRVG…AEVAPGSQVK (102 aa)).

It belongs to the class-I aminoacyl-tRNA synthetase family. MetG type 1 subfamily. Homodimer. It depends on Zn(2+) as a cofactor.

It localises to the cytoplasm. It carries out the reaction tRNA(Met) + L-methionine + ATP = L-methionyl-tRNA(Met) + AMP + diphosphate. Is required not only for elongation of protein synthesis but also for the initiation of all mRNA translation through initiator tRNA(fMet) aminoacylation. The chain is Methionine--tRNA ligase from Porphyromonas gingivalis (strain ATCC 33277 / DSM 20709 / CIP 103683 / JCM 12257 / NCTC 11834 / 2561).